Here is a 173-residue protein sequence, read N- to C-terminus: Large ribosomal subunit protein uL16 (173 aa).

This sequence belongs to the universal ribosomal protein uL16 family.

This chain is Large ribosomal subunit protein uL16, found in Methanosarcina acetivorans (strain ATCC 35395 / DSM 2834 / JCM 12185 / C2A).